A 152-amino-acid polypeptide reads, in one-letter code: Protein SprT-like (152 aa).

The 142-residue stretch at 7-148 folds into the SprT-like domain; sequence QRLVEEVSLQ…GKCKGKLILI (142 aa). Histidine 67 provides a ligand contact to Zn(2+). Glutamate 68 is an active-site residue. Histidine 71 lines the Zn(2+) pocket.

It belongs to the SprT family. The cofactor is Zn(2+).

It is found in the cytoplasm. The chain is Protein SprT-like from Bacillus cereus (strain AH187).